We begin with the raw amino-acid sequence, 121 residues long: Alpha-lactalbumin (121 aa).

Residues 1–121 (IDYRKCQASQ…CLEDLDQWRC (121 aa)) enclose the C-type lysozyme domain. 4 disulfide bridges follow: Cys-6–Cys-121, Cys-28–Cys-112, Cys-61–Cys-77, and Cys-73–Cys-91. Residue Asn-44 is glycosylated (N-linked (GlcNAc...) asparagine). Positions 79, 82, 84, 87, and 88 each coordinate Ca(2+).

It belongs to the glycosyl hydrolase 22 family. Lactose synthase (LS) is a heterodimer of a catalytic component, beta1,4-galactosyltransferase (beta4Gal-T1) and a regulatory component, alpha-lactalbumin (LA). As to expression, mammary gland specific. Secreted in milk.

The protein resides in the secreted. Functionally, regulatory subunit of lactose synthase, changes the substrate specificity of galactosyltransferase in the mammary gland making glucose a good acceptor substrate for this enzyme. This enables LS to synthesize lactose, the major carbohydrate component of milk. In other tissues, galactosyltransferase transfers galactose onto the N-acetylglucosamine of the oligosaccharide chains in glycoproteins. The chain is Alpha-lactalbumin (LALBA) from Notamacropus rufogriseus (Red-necked wallaby).